Consider the following 239-residue polypeptide: Ribonuclease HII (239 aa).

The RNase H type-2 domain maps to 30-221; the sequence is GPVAGVDEVG…VRRVANGSGG (192 aa). Positions 36, 37, and 130 each coordinate a divalent metal cation.

It belongs to the RNase HII family. The cofactor is Mn(2+). It depends on Mg(2+) as a cofactor.

The protein localises to the cytoplasm. It catalyses the reaction Endonucleolytic cleavage to 5'-phosphomonoester.. Functionally, endonuclease that specifically degrades the RNA of RNA-DNA hybrids. This Mycolicibacterium paratuberculosis (strain ATCC BAA-968 / K-10) (Mycobacterium paratuberculosis) protein is Ribonuclease HII.